The sequence spans 205 residues: MPVVFVAASKLPTPFATFTMHGFLDEATGREHVVLSLGDIADGQPVLGRLHSECLTGDALFSQRCDCGSQLEAALQAIAREGRGVLLYLRQEGRGIGLLNKIRAYELQDGGADTVEANERLGFAADQRDYAICLPMLEHLGVKSLRLMTNNPRKVKALTDMNIVVAERVPLHTGHNPHNRYYLATKAGKLGHMLGNEHQGEVPQA.

GTP is bound at residue 49 to 53 (RLHSE). Residues cysteine 54, cysteine 65, and cysteine 67 each contribute to the Zn(2+) site. GTP is bound by residues glutamine 70, 92–94 (EGR), and threonine 114. The active-site Proton acceptor is aspartate 126. Residue arginine 128 is the Nucleophile of the active site. Threonine 149 and lysine 154 together coordinate GTP.

It belongs to the GTP cyclohydrolase II family. It depends on Zn(2+) as a cofactor.

It catalyses the reaction GTP + 4 H2O = 2,5-diamino-6-hydroxy-4-(5-phosphoribosylamino)-pyrimidine + formate + 2 phosphate + 3 H(+). The protein operates within cofactor biosynthesis; riboflavin biosynthesis; 5-amino-6-(D-ribitylamino)uracil from GTP: step 1/4. Functionally, catalyzes the conversion of GTP to 2,5-diamino-6-ribosylamino-4(3H)-pyrimidinone 5'-phosphate (DARP), formate and pyrophosphate. The chain is GTP cyclohydrolase-2 from Pseudomonas putida (strain ATCC 700007 / DSM 6899 / JCM 31910 / BCRC 17059 / LMG 24140 / F1).